The following is a 461-amino-acid chain: tRNA-2-methylthio-N(6)-dimethylallyladenosine synthase (461 aa).

The region spanning 18–134 (KHIYIQTLGC…LPDFISRIEK (117 aa)) is the MTTase N-terminal domain. [4Fe-4S] cluster contacts are provided by Cys27, Cys63, Cys97, Cys172, Cys176, and Cys179. One can recognise a Radical SAM core domain in the interval 158–388 (CNGQVSSFVT…QALQEQHTLE (231 aa)). The 64-residue stretch at 391–454 (KAMEGKQEDV…LHSLRGEMLC (64 aa)) folds into the TRAM domain.

This sequence belongs to the methylthiotransferase family. MiaB subfamily. In terms of assembly, monomer. It depends on [4Fe-4S] cluster as a cofactor.

It localises to the cytoplasm. The enzyme catalyses N(6)-dimethylallyladenosine(37) in tRNA + (sulfur carrier)-SH + AH2 + 2 S-adenosyl-L-methionine = 2-methylsulfanyl-N(6)-dimethylallyladenosine(37) in tRNA + (sulfur carrier)-H + 5'-deoxyadenosine + L-methionine + A + S-adenosyl-L-homocysteine + 2 H(+). Catalyzes the methylthiolation of N6-(dimethylallyl)adenosine (i(6)A), leading to the formation of 2-methylthio-N6-(dimethylallyl)adenosine (ms(2)i(6)A) at position 37 in tRNAs that read codons beginning with uridine. The chain is tRNA-2-methylthio-N(6)-dimethylallyladenosine synthase from Syntrophus aciditrophicus (strain SB).